The primary structure comprises 139 residues: Ribonuclease P/MRP protein subunit POP5 (139 aa).

It belongs to the eukaryotic/archaeal RNase P protein component 2 family.

The protein localises to the nucleus. It catalyses the reaction Endonucleolytic cleavage of RNA, removing 5'-extranucleotides from tRNA precursor.. Component of ribonuclease P, a protein complex that generates mature tRNA molecules by cleaving their 5'-ends. Also a component of RNase MRP, which cleaves pre-rRNA sequences. The protein is Ribonuclease P/MRP protein subunit POP5 of Schizosaccharomyces pombe (strain 972 / ATCC 24843) (Fission yeast).